The primary structure comprises 185 residues: Adenine phosphoribosyltransferase (185 aa).

It belongs to the purine/pyrimidine phosphoribosyltransferase family. Homodimer.

It localises to the cytoplasm. It carries out the reaction AMP + diphosphate = 5-phospho-alpha-D-ribose 1-diphosphate + adenine. The protein operates within purine metabolism; AMP biosynthesis via salvage pathway; AMP from adenine: step 1/1. In terms of biological role, catalyzes a salvage reaction resulting in the formation of AMP, that is energically less costly than de novo synthesis. The protein is Adenine phosphoribosyltransferase of Arthrobacter sp. (strain FB24).